Reading from the N-terminus, the 212-residue chain is V-type ATP synthase subunit E (212 aa).

It belongs to the V-ATPase E subunit family.

Its function is as follows. Produces ATP from ADP in the presence of a proton gradient across the membrane. The polypeptide is V-type ATP synthase subunit E (Nitrosococcus oceani (strain ATCC 19707 / BCRC 17464 / JCM 30415 / NCIMB 11848 / C-107)).